Reading from the N-terminus, the 59-residue chain is Conorfamide-Ep1 (59 aa).

An N-terminal signal peptide occupies residues 1 to 19 (MSGCGFLLLALLLLVTVEA). The propeptide occupies 20–25 (TKMEKK). Position 43 is an isoleucine amide (isoleucine 43). Positions 45 to 59 (RRDMQSPLLSERLRF) are excised as a propeptide.

Belongs to the FARP (FMRFamide related peptide) family. Expressed by the venom duct.

The protein localises to the secreted. Functionally, neurotoxin that is active on vertebrates. When tested at high doses (10 uM), the toxin affects all zebrafish and mouse DRG neurons in culture, which could be an indication of an effect on a widely expressed receptor or ion channel found in both species. At low doses (1 uM), the effects of the toxin are confined to a specific subpopulation of zebrafish and mouse DRG neurons. In vivo, it induces long-lasting dramatic alterations in the locomotor behavior of zebrafish larvae. It rapidly induces hypoactivity and death of larvae at high doses and it causes hyperactivity at lower doses. In zebrafish adults, intramuscular injection causes the decrease of the movements and visited spaces. In mice, intracranial injection causes lethargy and prolonges sleeping phases and reduced movement. This Conus episcopatus (Bishop's cone) protein is Conorfamide-Ep1.